The chain runs to 695 residues: Nucleoprotein (695 aa).

Coiled-coil stretches lie at residues 316–341 (VNVGEQYQQLREAAHDAEVKLQRRHE) and 372–400 (QTLAVLSQKREKLARLAAEIENNIAEDQG). Disordered stretches follow at residues 426–458 (RSINRPTALPPPVDNKIEHETEEDSSSSSSFVD) and 472–611 (TLEN…EDTR). Positions 474-484 (ENSVMAPSTTL) are enriched in polar residues. Basic and acidic residues predominate over residues 502-516 (ISQKKQGNESTDPAR). Positions 529–547 (QEDDESEYTTDSQESDDQP) are enriched in acidic residues. The short motif at 603–606 (PSAP) is the PTAP/PSAP motif element.

It belongs to the filoviruses nucleoprotein family. Homooligomer. Homomultimerizes to form the nucleocapsid. Binds to viral genomic RNA. Interacts with VP35 and VP30 to form the nucleocapsid. Also interacts with VP24 and VP40. Phosphorylated.

It is found in the virion. Its subcellular location is the host cytoplasm. Its function is as follows. Encapsidates the genome, protecting it from nucleases. The encapsidated genomic RNA is termed the nucleocapsid and serves as template for transcription and replication. During replication, encapsidation by NP is coupled to RNA synthesis and all replicative products are resistant to nucleases. This is Nucleoprotein (NP) from Lake Victoria marburgvirus (strain Ravn-87) (MARV).